The chain runs to 152 residues: 3-dehydroquinate dehydratase (152 aa).

Y26 acts as the Proton acceptor in catalysis. Substrate-binding residues include N77, H83, and D90. H103 serves as the catalytic Proton donor. Substrate contacts are provided by residues 104 to 105 (LS) and R114.

Belongs to the type-II 3-dehydroquinase family. Homododecamer.

The catalysed reaction is 3-dehydroquinate = 3-dehydroshikimate + H2O. The protein operates within metabolic intermediate biosynthesis; chorismate biosynthesis; chorismate from D-erythrose 4-phosphate and phosphoenolpyruvate: step 3/7. Its function is as follows. Catalyzes a trans-dehydration via an enolate intermediate. This is 3-dehydroquinate dehydratase (aroQ) from Synechocystis sp. (strain ATCC 27184 / PCC 6803 / Kazusa).